Here is a 92-residue protein sequence, read N- to C-terminus: Large ribosomal subunit protein eL43 (92 aa).

Residues cysteine 39, cysteine 42, cysteine 57, and cysteine 60 each contribute to the Zn(2+) site. The C4-type zinc finger occupies 39 to 60 (CPNCGEDRVDRQGTGIWQCSYC).

It belongs to the eukaryotic ribosomal protein eL43 family. Putative zinc-binding subfamily. In terms of assembly, part of the 50S ribosomal subunit. Contacts protein L2. Zn(2+) is required as a cofactor.

In terms of biological role, binds to the 23S rRNA. This chain is Large ribosomal subunit protein eL43, found in Haloarcula marismortui (strain ATCC 43049 / DSM 3752 / JCM 8966 / VKM B-1809) (Halobacterium marismortui).